Here is a 140-residue protein sequence, read N- to C-terminus: Small ribosomal subunit protein uS12m (140 aa).

A mitochondrion-targeting transit peptide spans 1-30 (MNFLRQSFGITKQLASQAIQCSYETAVRGM).

The protein belongs to the universal ribosomal protein uS12 family.

It localises to the mitochondrion. The polypeptide is Small ribosomal subunit protein uS12m (tko) (Drosophila melanogaster (Fruit fly)).